The sequence spans 1342 residues: DNA-directed RNA polymerase subunit beta (1342 aa).

Belongs to the RNA polymerase beta chain family. As to quaternary structure, the RNAP catalytic core consists of 2 alpha, 1 beta, 1 beta' and 1 omega subunit. When a sigma factor is associated with the core the holoenzyme is formed, which can initiate transcription.

It catalyses the reaction RNA(n) + a ribonucleoside 5'-triphosphate = RNA(n+1) + diphosphate. In terms of biological role, DNA-dependent RNA polymerase catalyzes the transcription of DNA into RNA using the four ribonucleoside triphosphates as substrates. This chain is DNA-directed RNA polymerase subunit beta, found in Aeromonas salmonicida (strain A449).